Reading from the N-terminus, the 380-residue chain is Rab9 effector protein with kelch motifs (380 aa).

6 Kelch repeats span residues 57 to 103 (KIFI…FLPS), 108 to 154 (SIWV…TSSA), 159 to 211 (QLYV…AAGT), 212 to 258 (KLFI…AAVA), 262 to 311 (HVYM…VIPW), and 357 to 380 (LCFV…TVVD).

As to quaternary structure, interacts with PIKFYVE; the interaction recruits RABEPK to the endosomal membrane. Interacts with RAB9 in its GTP-bound conformation. In terms of processing, phosphorylated on Ser residues by PIKFYVE.

The protein resides in the cytoplasm. The protein localises to the endosome membrane. Rab9 effector required for endosome to trans-Golgi network (TGN) transport. The protein is Rab9 effector protein with kelch motifs of Mus musculus (Mouse).